Consider the following 791-residue polypeptide: Cellobionic acid phosphorylase (791 aa).

Asp-478 (proton donor) is an active-site residue.

The protein belongs to the glycosyl hydrolase 94 family. Cellobionic acid phosphorylase subfamily. Homodimer.

The enzyme catalyses 4-O-beta-D-glucopyranosyl-D-gluconate + phosphate = D-gluconate + alpha-D-glucose 1-phosphate. Its pathway is glycan metabolism; cellulose degradation. Functionally, catalyzes the reversible phosphorolysis of cellobionic acid (4-O-beta-D-glucopyranosyl-D-gluconate), a probable step in cellulose degradation. May be part of a metabolic pathway where cellobionic acid is converted into alpha-D-glucose 1-phosphate and D-gluconic acid to enter glycolysis and the pentose phosphate pathway, respectively. Produces 4-O-beta-D-glucopyranosyl-D-glucuronate from alpha-D-glucose 1-phosphate and D-glucuronate with low activity in the synthetic direction. The polypeptide is Cellobionic acid phosphorylase (Neurospora crassa (strain ATCC 24698 / 74-OR23-1A / CBS 708.71 / DSM 1257 / FGSC 987)).